The sequence spans 158 residues: UPF0329 protein ECU06_0050 (158 aa).

Belongs to the UPF0329 family.

This chain is UPF0329 protein ECU06_0050, found in Encephalitozoon cuniculi (strain GB-M1) (Microsporidian parasite).